A 90-amino-acid chain; its full sequence is Small ribosomal subunit protein uS19 (90 aa).

It belongs to the universal ribosomal protein uS19 family.

Its function is as follows. Protein S19 forms a complex with S13 that binds strongly to the 16S ribosomal RNA. In Clostridium beijerinckii (strain ATCC 51743 / NCIMB 8052) (Clostridium acetobutylicum), this protein is Small ribosomal subunit protein uS19.